The sequence spans 426 residues: Kynureninase (426 aa).

Residues Leu-110, Ser-111, 138-141 (FPSD), Asp-223, His-226, and Tyr-248 each bind pyridoxal 5'-phosphate. Lys-249 carries the N6-(pyridoxal phosphate)lysine modification. Residues Trp-279 and Asn-307 each contribute to the pyridoxal 5'-phosphate site.

It belongs to the kynureninase family. In terms of assembly, homodimer. Requires pyridoxal 5'-phosphate as cofactor.

The catalysed reaction is L-kynurenine + H2O = anthranilate + L-alanine + H(+). The enzyme catalyses 3-hydroxy-L-kynurenine + H2O = 3-hydroxyanthranilate + L-alanine + H(+). It functions in the pathway amino-acid degradation; L-kynurenine degradation; L-alanine and anthranilate from L-kynurenine: step 1/1. It participates in cofactor biosynthesis; NAD(+) biosynthesis; quinolinate from L-kynurenine: step 2/3. Functionally, catalyzes the cleavage of L-kynurenine (L-Kyn) and L-3-hydroxykynurenine (L-3OHKyn) into anthranilic acid (AA) and 3-hydroxyanthranilic acid (3-OHAA), respectively. In Myxococcus xanthus (strain DK1622), this protein is Kynureninase.